The sequence spans 526 residues: Fumitremorgin C synthase (526 aa).

A helical transmembrane segment spans residues 4 to 24; that stretch reads LPLSPAVLFLTITLPILYFWI. Residue C443 coordinates heme.

It belongs to the cytochrome P450 family. Requires heme as cofactor.

It localises to the membrane. It carries out the reaction tryprostatin A + reduced [NADPH--hemoprotein reductase] + O2 = fumitremorgin C + oxidized [NADPH--hemoprotein reductase] + 2 H2O + H(+). It functions in the pathway mycotoxin biosynthesis. In terms of biological role, cytochrome P450 monooxygenase; part of the gene cluster that mediates the biosynthesis of fumitremorgins, indole alkaloids that carry not only intriguing chemical structures, but also interesting biological and pharmacological activities. The biosynthesis of fumitremorgin-type alkaloids begins by condensation of the two amino acids L-tryptophan and L-proline to brevianamide F, catalyzed by the non-ribosomal peptide synthetase ftmPS/ftmA. Brevianamide F is then prenylated by the prenyltransferase ftmPT1/ftmB in the presence of dimethylallyl diphosphate, resulting in the formation of tryprostatin B. The three cytochrome P450 monooxygenases, ftmP450-1/ftmC, ftmP450-2/ftmE and ftmP450-3/FtmG, are responsible for the conversion of tryprostatin B to 6-hydroxytryprostatin B, tryprostatin A to fumitremorgin C and fumitremorgin C to 12,13-dihydroxyfumitremorgin C, respectively. The putative methyltransferase ftmMT/ftmD is expected for the conversion of 6-hydroxytryprostatin B to tryprostatin A. FtmPT2/FtmH catalyzes the prenylation of 12,13-dihydroxyfumitre-morgin C in the presence of dimethylallyl diphosphate, resulting in the formation of fumitremorgin B. Fumitremorgin B is further converted to verruculogen by ftmOx1/ftmF via the insertion of an endoperoxide bond between the two prenyl moieties. Finally, verruculogen is further converted to fumitremorgin A by the verruculogen prenyltransferase ftmPT3. The protein is Fumitremorgin C synthase of Neosartorya fischeri (strain ATCC 1020 / DSM 3700 / CBS 544.65 / FGSC A1164 / JCM 1740 / NRRL 181 / WB 181) (Aspergillus fischerianus).